The following is a 475-amino-acid chain: uncharacterized protein (475 aa).

4Fe-4S ferredoxin-type domains lie at 303–333 and 352–381; these read ASEF…GHGY and YKDF…LSKL. [4Fe-4S] cluster contacts are provided by Cys312, Cys315, Cys318, Cys322, Cys362, Cys365, Cys368, and Cys372.

The protein belongs to the LutB/YkgF family.

This is an uncharacterized protein from Escherichia coli (strain K12).